The following is a 115-amino-acid chain: NADH-ubiquinone oxidoreductase chain 3 (115 aa).

A run of 3 helical transmembrane segments spans residues 4 to 24, 55 to 75, and 84 to 104; these read LLTMLTNITLSTLLISIAFWL, FFLVAITFLLFDLEIALLLPI, and INTMTLTAFILVSILALGLAY.

The protein belongs to the complex I subunit 3 family. In terms of assembly, core subunit of respiratory chain NADH dehydrogenase (Complex I) which is composed of 45 different subunits. Interacts with TMEM186. Interacts with TMEM242.

The protein localises to the mitochondrion inner membrane. It carries out the reaction a ubiquinone + NADH + 5 H(+)(in) = a ubiquinol + NAD(+) + 4 H(+)(out). In terms of biological role, core subunit of the mitochondrial membrane respiratory chain NADH dehydrogenase (Complex I) which catalyzes electron transfer from NADH through the respiratory chain, using ubiquinone as an electron acceptor. Essential for the catalytic activity of complex I. In Neotoma lepida (Desert woodrat), this protein is NADH-ubiquinone oxidoreductase chain 3.